The chain runs to 560 residues: DNA ligase B (560 aa).

The active-site N6-AMP-lysine intermediate is the K128.

It belongs to the NAD-dependent DNA ligase family. LigB subfamily.

The enzyme catalyses NAD(+) + (deoxyribonucleotide)n-3'-hydroxyl + 5'-phospho-(deoxyribonucleotide)m = (deoxyribonucleotide)n+m + AMP + beta-nicotinamide D-nucleotide.. Functionally, catalyzes the formation of phosphodiester linkages between 5'-phosphoryl and 3'-hydroxyl groups in double-stranded DNA using NAD as a coenzyme and as the energy source for the reaction. This is DNA ligase B from Azotobacter vinelandii (strain DJ / ATCC BAA-1303).